An 849-amino-acid polypeptide reads, in one-letter code: Glycogen phosphorylase (849 aa).

The residue at position 679 (Lys-679) is an N6-(pyridoxal phosphate)lysine.

It belongs to the glycogen phosphorylase family. Pyridoxal 5'-phosphate serves as cofactor.

It catalyses the reaction [(1-&gt;4)-alpha-D-glucosyl](n) + phosphate = [(1-&gt;4)-alpha-D-glucosyl](n-1) + alpha-D-glucose 1-phosphate. In terms of biological role, phosphorylase is an important allosteric enzyme in carbohydrate metabolism. Enzymes from different sources differ in their regulatory mechanisms and in their natural substrates. However, all known phosphorylases share catalytic and structural properties. In Synechocystis sp. (strain ATCC 27184 / PCC 6803 / Kazusa), this protein is Glycogen phosphorylase (glgP).